The chain runs to 340 residues: N-acetyl-gamma-glutamyl-phosphate reductase (340 aa).

Residue Cys-146 is part of the active site.

It belongs to the NAGSA dehydrogenase family. Type 1 subfamily.

It localises to the cytoplasm. It catalyses the reaction N-acetyl-L-glutamate 5-semialdehyde + phosphate + NADP(+) = N-acetyl-L-glutamyl 5-phosphate + NADPH + H(+). It functions in the pathway amino-acid biosynthesis; L-arginine biosynthesis; N(2)-acetyl-L-ornithine from L-glutamate: step 3/4. In terms of biological role, catalyzes the NADPH-dependent reduction of N-acetyl-5-glutamyl phosphate to yield N-acetyl-L-glutamate 5-semialdehyde. The polypeptide is N-acetyl-gamma-glutamyl-phosphate reductase (Streptococcus thermophilus (strain CNRZ 1066)).